We begin with the raw amino-acid sequence, 336 residues long: MSEMRTLGEFIVEKQSDFPHASGDLSSLLSSIRLAAKIVNREINKAGLVDITGAVGTDNVQGEEQQKLDLYANDKFKAALEARDQVCGVASEEEDEAVAFNKELNKNAKYVVLMDPLDGSSNIDVNVSVGTIFSIYRRVSPVGTPPTQEDFLQPGHKQVAAGYVIYGSSTMLVYTTGAGVNGFTYDPSLGTFCLSHENMMIPDEGKIYSINEGNYIRFPTGVKKYIKYCQENEPSDNRPYTSRYIGSLVSDFHRNLLKGGIYLYPSTQSHPQGKLRLLYECNPIAFIMEQAGGIASDGAQRIMDIKPTELHQRVPFFVGSKNMVKKVEEFLELNRD.

Mg(2+)-binding residues include E92, D115, L117, and D118. Substrate-binding positions include 118-121 (DGSS), N211, Y244, 262-264 (YLY), and K274. Mg(2+) is bound at residue E280.

This sequence belongs to the FBPase class 1 family. In terms of assembly, homotetramer. It depends on Mg(2+) as a cofactor.

The protein resides in the cytoplasm. It carries out the reaction beta-D-fructose 1,6-bisphosphate + H2O = beta-D-fructose 6-phosphate + phosphate. It functions in the pathway carbohydrate biosynthesis; gluconeogenesis. The protein is Fructose-1,6-bisphosphatase class 1 of Vibrio atlanticus (strain LGP32) (Vibrio splendidus (strain Mel32)).